Here is a 672-residue protein sequence, read N- to C-terminus: Spermatid perinuclear RNA-binding protein (672 aa).

In terms of domain architecture, DZF spans 5-363 (RSFANDDRHV…ALKRPFEDGL (359 aa)). 2 disordered regions span residues 52–73 (TNKG…GENY) and 349–371 (GAGS…DPNK). Positions 357–371 (RPFEDGLGDDKDPNK) are enriched in basic and acidic residues. The 67-residue stretch at 387 to 453 (DLMNALMRLN…AVKVLQAMGY (67 aa)) folds into the DRBM 1 domain. A compositionally biased stretch (basic and acidic residues) spans 466–476 (SDEKSDNESKN). The tract at residues 466-499 (SDEKSDNESKNETVSSNSSNNTGNSTTETSSTLE) is disordered. Positions 477-497 (ETVSSNSSNNTGNSTTETSST) are enriched in low complexity. A DRBM 2 domain is found at 510–576 (SGKNPVMELN…ALAALEKLFS (67 aa)). Residues R612 and R617 each carry the asymmetric dimethylarginine modification.

In terms of assembly, interacts with EIF2AK2. Associates with microtubules; it is unsure whether such interaction is direct or indirect.

It is found in the cytoplasm. Involved in spermatogenesis and sperm function. Plays a role in regulation of cell growth. Binds to double-stranded DNA and RNA. Binds most efficiently to poly(I:C) RNA than to poly(dI:dC) DNA. Binds also to single-stranded poly(G) RNA. Binds non-specifically to the mRNA PRM1 3'-UTR and adenovirus VA RNA. This chain is Spermatid perinuclear RNA-binding protein (STRBP), found in Homo sapiens (Human).